Reading from the N-terminus, the 93-residue chain is Small ribosomal subunit protein bS18 (93 aa).

The protein belongs to the bacterial ribosomal protein bS18 family. Part of the 30S ribosomal subunit. Forms a tight heterodimer with protein bS6.

Binds as a heterodimer with protein bS6 to the central domain of the 16S rRNA, where it helps stabilize the platform of the 30S subunit. This Verminephrobacter eiseniae (strain EF01-2) protein is Small ribosomal subunit protein bS18.